A 348-amino-acid chain; its full sequence is Uroporphyrinogen decarboxylase (348 aa).

Substrate contacts are provided by residues 27–31 (RQAGR), phenylalanine 46, aspartate 76, tyrosine 152, serine 207, and histidine 320.

It belongs to the uroporphyrinogen decarboxylase family. As to quaternary structure, homodimer.

It localises to the cytoplasm. The catalysed reaction is uroporphyrinogen III + 4 H(+) = coproporphyrinogen III + 4 CO2. It functions in the pathway porphyrin-containing compound metabolism; protoporphyrin-IX biosynthesis; coproporphyrinogen-III from 5-aminolevulinate: step 4/4. Functionally, catalyzes the decarboxylation of four acetate groups of uroporphyrinogen-III to yield coproporphyrinogen-III. This is Uroporphyrinogen decarboxylase from Bacillus cytotoxicus (strain DSM 22905 / CIP 110041 / 391-98 / NVH 391-98).